The primary structure comprises 103 residues: Nematocin (103 aa).

An N-terminal signal peptide occupies residues 1–19 (MGSSPILLVLAISIGLASA). Cys-20 and Cys-25 are joined by a disulfide. At Tyr-30 the chain carries Tyrosine amide. The propeptide occupies 31–103 (GRTIRCSSCG…QGGCQTSAMC (73 aa)).

The protein belongs to the vasopressin/oxytocin family. In terms of tissue distribution, detected in thermosensory AFD neurons, neurosecretory NSM cells, AVK interneurons, pharyngeal neuron M5, and the mechanosensory DVA neuron. Detected in male-specific CP motor neurons.

It localises to the secreted. Ligand for the G-protein coupled receptor ntr-1. Plays a role in gustatory associative learning. Also plays a role in male mating behavior. This chain is Nematocin, found in Caenorhabditis elegans.